Consider the following 311-residue polypeptide: Ribonuclease Z (311 aa).

7 residues coordinate Zn(2+): His-63, His-65, Asp-67, His-68, His-141, Asp-212, and His-270. Asp-67 serves as the catalytic Proton acceptor.

Belongs to the RNase Z family. As to quaternary structure, homodimer. Zn(2+) serves as cofactor.

It carries out the reaction Endonucleolytic cleavage of RNA, removing extra 3' nucleotides from tRNA precursor, generating 3' termini of tRNAs. A 3'-hydroxy group is left at the tRNA terminus and a 5'-phosphoryl group is left at the trailer molecule.. Its function is as follows. Zinc phosphodiesterase, which displays some tRNA 3'-processing endonuclease activity. Probably involved in tRNA maturation, by removing a 3'-trailer from precursor tRNA. This Lactiplantibacillus plantarum (strain ATCC BAA-793 / NCIMB 8826 / WCFS1) (Lactobacillus plantarum) protein is Ribonuclease Z.